The following is a 379-amino-acid chain: Alternative oxidase 1, mitochondrial (379 aa).

A compositionally biased stretch (low complexity) spans 33 to 50 (TTTTSTKSRSSTSTAATT). The tract at residues 33–76 (TTTTSTKSRSSTSTAATTVGNSNPKSPIDEDNLEKPGTIPTKHK) is disordered. The Fe cation site is built by Glu180, Glu219, and His222. Residues 234 to 256 (WFTRSIIYIGQGVFTNIFFLVYL) form a helical membrane-spanning segment. Residues Glu270, Glu271, Glu326, and His329 each contribute to the Fe cation site.

It belongs to the alternative oxidase family. Requires Fe cation as cofactor.

Its subcellular location is the mitochondrion inner membrane. Its function is as follows. Catalyzes cyanide-resistant oxygen consumption. May increase respiration when the cytochrome respiratory pathway is restricted, or in response to low temperatures. The sequence is that of Alternative oxidase 1, mitochondrial (AOX1) from Candida albicans (Yeast).